The primary structure comprises 308 residues: Dihydroorotate dehydrogenase A (fumarate) (308 aa).

Residues Ser-24 and 48–49 (KS) each bind FMN. Residues Lys-48, 72-76 (NANGL), and Asn-132 contribute to the substrate site. Residue Asn-132 participates in FMN binding. Residue Cys-135 is the Nucleophile of the active site. FMN contacts are provided by Lys-171 and Ile-197. 198 to 199 (NT) contributes to the substrate binding site. FMN-binding positions include Gly-223 and 249–250 (GG).

It belongs to the dihydroorotate dehydrogenase family. Type 1 subfamily. In terms of assembly, homodimer. The cofactor is FMN.

It is found in the cytoplasm. The enzyme catalyses (S)-dihydroorotate + fumarate = orotate + succinate. Its pathway is pyrimidine metabolism; UMP biosynthesis via de novo pathway. Functionally, catalyzes the conversion of dihydroorotate to orotate with fumarate as the electron acceptor. The polypeptide is Dihydroorotate dehydrogenase A (fumarate) (pyrD) (Limosilactobacillus reuteri (strain DSM 20016) (Lactobacillus reuteri)).